The chain runs to 196 residues: Putative 3-methyladenine DNA glycosylase (196 aa).

This sequence belongs to the DNA glycosylase MPG family.

In Chlorobium phaeobacteroides (strain DSM 266 / SMG 266 / 2430), this protein is Putative 3-methyladenine DNA glycosylase.